Here is a 238-residue protein sequence, read N- to C-terminus: Probable amino-acid ABC transporter permease protein y4tF (238 aa).

The ABC transmembrane type-1 domain maps to 29 to 223; sequence AWVTIQFTLY…GIALVLSFFM (195 aa). 5 consecutive transmembrane segments (helical) span residues 33-53, 77-97, 103-123, 152-172, and 203-223; these read IQFT…FGIG, LLVQ…MMGI, PVVA…AEIV, VALP…AIAA, and TVYT…SFFM.

This sequence belongs to the binding-protein-dependent transport system permease family. HisMQ subfamily.

Its subcellular location is the cell inner membrane. Probably part of the binding-protein-dependent transport system y4tEFGH for an amino acid. Probably responsible for the translocation of the substrate across the membrane. This chain is Probable amino-acid ABC transporter permease protein y4tF, found in Sinorhizobium fredii (strain NBRC 101917 / NGR234).